Reading from the N-terminus, the 316-residue chain is Probable cell division protein WhiA (316 aa).

The H-T-H motif DNA-binding region spans 276 to 309; sequence SLEELGKIAEPQITKDAIAGRIRRLLQLAEKTEK.

The protein belongs to the WhiA family.

Involved in cell division and chromosome segregation. This Bifidobacterium longum (strain NCC 2705) protein is Probable cell division protein WhiA.